Reading from the N-terminus, the 372-residue chain is MAFKQLLAALSVALTLQVTQAAPNLDKRVACPDGVHTASNAACCAWFPVLDDIQQNLFHGGQCGAEAHEALRMVFHDSIAISPKLQSQGKFGGGGADGSIITFSSIETTYHPNIGLDEVVAIQKPFIAKHGVTRGDFIAFAGAVGVSNCPGAPQMQFFLGRPEATQAAPDGLVPEPFHTIDQVLARMLDAGGFDEIETVWLLSAHSIAAANDVDPTISGLPFDSTPGQFDSQFFVETQLRGTAFPGKTGIQGTVMSPLKGEMRLQTDHLFARDSRTACEWQSFVNNQTKLQEDFQFIFTALSTLGHDMNAMTDCSEVIPAPKPVNFGPSFFPAGKTHADIEQACASTPFPTLITAPGPSASVARIPPPPSPN.

An N-terminal signal peptide occupies residues 1–21 (MAFKQLLAALSVALTLQVTQA). A propeptide spanning residues 22 to 28 (APNLDKR) is cleaved from the precursor. Cystine bridges form between Cys31–Cys44, Cys43–Cys314, Cys63–Cys149, and Cys278–Cys344. Catalysis depends on His76, which acts as the Proton acceptor. Ca(2+) contacts are provided by Asp77, Gly95, Asp97, and Ser99. Heme b is bound at residue His205. Residues Ser206, Asp223, Thr225, Gln228, and Asp230 each contribute to the Ca(2+) site. Asn286 is a glycosylation site (N-linked (GlcNAc...) asparagine).

This sequence belongs to the peroxidase family. Ligninase subfamily. Heme b is required as a cofactor. The cofactor is Ca(2+).

The enzyme catalyses 1-(3,4-dimethoxyphenyl)-2-(2-methoxyphenoxy)propane-1,3-diol + H2O2 = 3,4-dimethoxybenzaldehyde + guaiacol + glycolaldehyde + H2O. It catalyses the reaction 2 (3,4-dimethoxyphenyl)methanol + H2O2 = 2 (3,4-dimethoxyphenyl)methanol radical + 2 H2O. The protein operates within secondary metabolite metabolism; lignin degradation. Depolymerization of lignin. Catalyzes the C(alpha)-C(beta) cleavage of the propyl side chains of lignin. This chain is Ligninase H2 (GLG4), found in Phanerodontia chrysosporium (White-rot fungus).